The following is a 289-amino-acid chain: Zinc finger matrin-type protein 3 (289 aa).

2 consecutive Matrin-type zinc fingers follow at residues 70 to 100 (LFCK…KLRN) and 147 to 177 (DYCK…RLRL). 2 disordered regions span residues 180-202 (AQSH…EGSE) and 265-289 (ESKQ…GYVQ). The Matrin-type 3 zinc-finger motif lies at 245-275 (FYCSMCNVGAGEEVEFRQHLESKQHKSKVSE). A compositionally biased stretch (basic and acidic residues) spans 265–282 (ESKQHKSKVSEQRYRSEM).

In terms of assembly, interacts with dsRNA. As to expression, highly expressed in brain, gut, lung, and testis.

It is found in the nucleus. It localises to the nucleolus. Functionally, acts as a bona fide target gene of p53/TP53. May play a role in the TP53-dependent growth regulatory pathway. May contribute to TP53-mediated apoptosis by regulation of TP53 expression and translocation to the nucleus and nucleolus. The sequence is that of Zinc finger matrin-type protein 3 from Rattus norvegicus (Rat).